Here is a 268-residue protein sequence, read N- to C-terminus: Myb-related protein 315 (268 aa).

HTH myb-type domains are found at residues 9-61 (KFGL…MNYL) and 62-116 (RPDL…KKKL). DNA-binding regions (H-T-H motif) lie at residues 37 to 61 (WRVIPKLAGLSRCGKSCRLRWMNYL) and 89 to 112 (WSKIALHIPGRTDNEIKNYWNTHI).

As to expression, expressed in roots, stems, leaves, seed pods and flowers. Strongest expression in the stem.

It is found in the nucleus. Transcription factor. The chain is Myb-related protein 315 from Antirrhinum majus (Garden snapdragon).